Here is a 386-residue protein sequence, read N- to C-terminus: Methionine import ATP-binding protein MetN 2 (386 aa).

Residues 32-272 (VIFDDVGKVF…PQHDATRALL (241 aa)) enclose the ABC transporter domain. Residue 69–76 (GRSGAGKS) participates in ATP binding.

It belongs to the ABC transporter superfamily. Methionine importer (TC 3.A.1.24) family. The complex is composed of two ATP-binding proteins (MetN), two transmembrane proteins (MetI) and a solute-binding protein (MetQ).

It is found in the cell inner membrane. It carries out the reaction L-methionine(out) + ATP + H2O = L-methionine(in) + ADP + phosphate + H(+). It catalyses the reaction D-methionine(out) + ATP + H2O = D-methionine(in) + ADP + phosphate + H(+). Functionally, part of the ABC transporter complex MetNIQ involved in methionine import. Responsible for energy coupling to the transport system. This is Methionine import ATP-binding protein MetN 2 from Paraburkholderia xenovorans (strain LB400).